A 252-amino-acid polypeptide reads, in one-letter code: MILYEYPFNERIRTLLRLEDLFDRLDYFLGQEHPLQHHVAITTIFEIIDVAGRADLKTDLIKELERQRQALAPLRSNPQIDQDALVAVITEIEQGIAALSQTVGKAGQLLADNEWLTSIRSRAIIPGGTCEFDLPAYYAWQHRDADDRRADILKWARPLASLRMGAGIVLRLLRESGQSGKVIATGGSYQQMLSGRSYQLMQVYLDESLLAFIPEMSANKYMLWVRFTQQDGDMRPRSVDADIPFLLKLCNF.

Belongs to the ZapD family. Interacts with FtsZ.

The protein resides in the cytoplasm. Its function is as follows. Cell division factor that enhances FtsZ-ring assembly. Directly interacts with FtsZ and promotes bundling of FtsZ protofilaments, with a reduction in FtsZ GTPase activity. This Cupriavidus metallidurans (strain ATCC 43123 / DSM 2839 / NBRC 102507 / CH34) (Ralstonia metallidurans) protein is Cell division protein ZapD.